The sequence spans 479 residues: Endo-beta-1,6-galactanase (479 aa).

An N-terminal signal peptide occupies residues 1 to 20; that stretch reads MRSIVLPSLALALFSQRARA. N-linked (GlcNAc...) asparagine glycosylation is present at Asn89. Glu210 serves as the catalytic Proton donor. The N-linked (GlcNAc...) asparagine glycan is linked to Asn271. The active-site Nucleophile is the Glu311. An N-linked (GlcNAc...) asparagine glycan is attached at Asn358.

It carries out the reaction Endohydrolysis of (1-&gt;6)-beta-D-galactosidic linkages in arabinogalactan proteins and (1-&gt;3):(1-&gt;6)-beta-galactans to yield galactose and beta-(1-&gt;6)-galactaobiose as the final products.. Hydrolyzes galactooligomers with a degree of polymerization higher than 3. Hydrolyzes radish root arabinogalactan-protein. Does not hydrolyze dextran, arabinan, starch, laminarin, beta-1,4- and beta-1,3-galactans, larch wood arabinogalactan or acid-insoluble polygalacturonic acid. The chain is Endo-beta-1,6-galactanase from Hypocrea rufa (Trichoderma viride).